The following is a 400-amino-acid chain: tRNA (guanine-N(7)-)-methyltransferase (400 aa).

Glutamate 124, glutamate 149, and aspartate 176 together coordinate S-adenosyl-L-methionine. Position 232 (aspartate 232) interacts with substrate.

This sequence belongs to the class I-like SAM-binding methyltransferase superfamily. TrmB family.

The catalysed reaction is guanosine(46) in tRNA + S-adenosyl-L-methionine = N(7)-methylguanosine(46) in tRNA + S-adenosyl-L-homocysteine. Its pathway is tRNA modification; N(7)-methylguanine-tRNA biosynthesis. In terms of biological role, catalyzes the formation of N(7)-methylguanine at position 46 (m7G46) in tRNA. This Helicobacter pylori (strain J99 / ATCC 700824) (Campylobacter pylori J99) protein is tRNA (guanine-N(7)-)-methyltransferase.